Here is a 307-residue protein sequence, read N- to C-terminus: Small ribosomal subunit biogenesis GTPase RsgA (307 aa).

The CP-type G domain occupies 64–229; it reads KNSLIRPSIA…IADTPGFSSL (166 aa). GTP contacts are provided by residues 113–116 and 172–180; these read SKLD and GQTGAGKTT. Cys-253, Cys-258, His-260, and Cys-266 together coordinate Zn(2+).

It belongs to the TRAFAC class YlqF/YawG GTPase family. RsgA subfamily. As to quaternary structure, monomer. Associates with 30S ribosomal subunit, binds 16S rRNA. Zn(2+) is required as a cofactor.

Its subcellular location is the cytoplasm. In terms of biological role, one of several proteins that assist in the late maturation steps of the functional core of the 30S ribosomal subunit. Helps release RbfA from mature subunits. May play a role in the assembly of ribosomal proteins into the subunit. Circularly permuted GTPase that catalyzes slow GTP hydrolysis, GTPase activity is stimulated by the 30S ribosomal subunit. The chain is Small ribosomal subunit biogenesis GTPase RsgA from Lactococcus lactis subsp. lactis (strain IL1403) (Streptococcus lactis).